The primary structure comprises 132 residues: Pro-MCH 1 (132 aa).

Positions 1-24 (MRHYVLSISFAVALFLECYTPSTA) are cleaved as a signal peptide. Cysteine 120 and cysteine 129 are oxidised to a cystine.

The protein belongs to the melanin-concentrating hormone family. In terms of tissue distribution, pituitary gland. Produced in neurons of lateral basal hypothalamus which project both to the brain and to the neural lobe of the pituitary gland from where MCH is released.

Plays a role in skin pigmentation by antagonizing the action of melanotropin alpha. Induces melanin concentration within the melanophores. May participate in the control of the hypothalamo-pituitary adrenal gland axis by inhibiting the release of ACTH. The protein is Pro-MCH 1 (mch1) of Oncorhynchus keta (Chum salmon).